A 177-amino-acid chain; its full sequence is Eggshell protein (177 aa).

The N-terminal stretch at 1–18 (MKQSLTLVFLVAIGYATA) is a signal peptide. 5 repeat units span residues 25 to 41 (YSGG…CDSG), 42 to 59 (YGDS…CGGG), 60 to 75 (YGGG…DCGN), 76 to 91 (YGGG…DCGN), and 92 to 112 (YGGG…CGGG). The 5 X approximate tandem repeats stretch occupies residues 25–112 (YSGGYGGGCY…GCSGGNCGGG (88 aa)). Residues 149–166 (GSGKGKGGGKGGKGGKGG) are compositionally biased toward gly residues. The segment at 149-177 (GSGKGKGGGKGGKGGKGGTYKPSHYGGGY) is disordered.

This Schistosoma mansoni (Blood fluke) protein is Eggshell protein (F10).